The following is a 190-amino-acid chain: Ribosome maturation factor RimM (190 aa).

In terms of domain architecture, PRC barrel spans 95-177 (EDDEFFYTDL…AGLIDSPDDL (83 aa)). The segment at 170-190 (LIDSPDDLTGKPPKPPGKTKE) is disordered. Pro residues predominate over residues 181–190 (PPKPPGKTKE).

This sequence belongs to the RimM family. In terms of assembly, binds ribosomal protein uS19.

Its subcellular location is the cytoplasm. Functionally, an accessory protein needed during the final step in the assembly of 30S ribosomal subunit, possibly for assembly of the head region. Essential for efficient processing of 16S rRNA. May be needed both before and after RbfA during the maturation of 16S rRNA. It has affinity for free ribosomal 30S subunits but not for 70S ribosomes. In Rhizobium rhizogenes (strain K84 / ATCC BAA-868) (Agrobacterium radiobacter), this protein is Ribosome maturation factor RimM.